The following is a 388-amino-acid chain: Staphopain A (388 aa).

Residues Met1–Ala25 form the signal peptide. The propeptide occupies Glu26–Thr214. Residues Cys238, His334, and Asn355 contribute to the active site.

The protein belongs to the peptidase C47 family. In the cytoplasm, prematurely activated/folded ScpA forms a stable non-covalent complex with ScpB. In terms of processing, cleavage leads to the activation of ScpA probably by an auto-catalytic manner.

It localises to the secreted. The catalysed reaction is Broad endopeptidase action on proteins including elastin, but rather limited hydrolysis of small-molecule substrates. Assays are conveniently made with hemoglobin, casein or Z-Phe-Arg-NHMec as substrate.. Its activity is regulated as follows. Prematurely activated/folded staphopain A is inhibited by staphostatin A (ScpB), which is probably required to protect staphylococcal cytoplasmic proteins from degradation by ScpA. Also inactivated by heavy metal ions such as Hg(2+) or Ag(+), iodoacetamide, E-64 and human plasma. Its function is as follows. Cysteine protease that plays an important role in the inhibition of host innate immune response. Cleaves host elastins found in connective tissues, pulmonary surfactant protein A in the lungs, and the chemokine receptor CXCR2 on leukocytes. Proteolytic cleavage of surfactant protein A impairs bacterial phagocytosis by neutrophils while CXCR2 degradation blocks neutrophil activation and chemotaxis. Additionally, promotes vascular leakage by activating the plasma kallikerin/kinin system, resulting in hypotension. The polypeptide is Staphopain A (sspP) (Staphylococcus aureus).